A 179-amino-acid polypeptide reads, in one-letter code: Large ribosomal subunit protein uL5 (179 aa).

The protein belongs to the universal ribosomal protein uL5 family. As to quaternary structure, part of the 50S ribosomal subunit; part of the 5S rRNA/L5/L18/L25 subcomplex. Contacts the 5S rRNA and the P site tRNA. Forms a bridge to the 30S subunit in the 70S ribosome.

Functionally, this is one of the proteins that bind and probably mediate the attachment of the 5S RNA into the large ribosomal subunit, where it forms part of the central protuberance. In the 70S ribosome it contacts protein S13 of the 30S subunit (bridge B1b), connecting the 2 subunits; this bridge is implicated in subunit movement. Contacts the P site tRNA; the 5S rRNA and some of its associated proteins might help stabilize positioning of ribosome-bound tRNAs. This Pseudomonas putida (strain W619) protein is Large ribosomal subunit protein uL5.